Reading from the N-terminus, the 156-residue chain is FAD synthase (156 aa).

Residues 9-10, 14-17, asparagine 92, and histidine 119 each bind ATP; these read TF and HPGH.

This sequence belongs to the archaeal FAD synthase family. As to quaternary structure, homodimer. A divalent metal cation serves as cofactor.

It carries out the reaction FMN + ATP + H(+) = FAD + diphosphate. The protein operates within cofactor biosynthesis; FAD biosynthesis; FAD from FMN: step 1/1. Functionally, catalyzes the transfer of the AMP portion of ATP to flavin mononucleotide (FMN) to produce flavin adenine dinucleotide (FAD) coenzyme. The sequence is that of FAD synthase from Methanospirillum hungatei JF-1 (strain ATCC 27890 / DSM 864 / NBRC 100397 / JF-1).